The primary structure comprises 391 residues: Digeranylgeranylglycerophospholipid reductase (391 aa).

G13, E32, C43, A44, G46, R97, A121, D277, G289, and I290 together coordinate FAD.

Belongs to the geranylgeranyl reductase family. DGGGPL reductase subfamily. Requires FAD as cofactor.

It catalyses the reaction a 2,3-bis-O-phytanyl-sn-glycerol 1-phospholipid + 8 oxidized 2[4Fe-4S]-[ferredoxin] = a 2,3-bis-O-(geranylgeranyl)-sn-glycerol 1-phospholipid + 8 reduced 2[4Fe-4S]-[ferredoxin] + 16 H(+). The enzyme catalyses 2,3-bis-O-(phytanyl)-sn-glycerol 1-phosphate + 8 oxidized 2[4Fe-4S]-[ferredoxin] = 2,3-bis-O-(geranylgeranyl)-sn-glycerol 1-phosphate + 8 reduced 2[4Fe-4S]-[ferredoxin] + 16 H(+). The catalysed reaction is a 2,3-bis-O-phytanyl-sn-glycerol 1-phospholipid + 8 A = a 2,3-bis-O-(geranylgeranyl)-sn-glycerol 1-phospholipid + 8 AH2. It carries out the reaction CDP-2,3-bis-O-(geranylgeranyl)-sn-glycerol + 8 AH2 = CDP-2,3-bis-O-(phytanyl)-sn-glycerol + 8 A. It catalyses the reaction archaetidylserine + 8 AH2 = 2,3-bis-O-phytanyl-sn-glycero-3-phospho-L-serine + 8 A. Its pathway is membrane lipid metabolism; glycerophospholipid metabolism. Is involved in the reduction of 2,3-digeranylgeranylglycerophospholipids (unsaturated archaeols) into 2,3-diphytanylglycerophospholipids (saturated archaeols) in the biosynthesis of archaeal membrane lipids. Catalyzes the formation of archaetidic acid (2,3-di-O-phytanyl-sn-glyceryl phosphate) from 2,3-di-O-geranylgeranylglyceryl phosphate (DGGGP) via the hydrogenation of each double bond of the isoprenoid chains. Is also probably able to reduce double bonds of geranyl groups in CDP-2,3-bis-O-(geranylgeranyl)-sn-glycerol and archaetidylserine, thus acting at various stages in the biosynthesis of archaeal membrane lipids. The polypeptide is Digeranylgeranylglycerophospholipid reductase (Methanothrix thermoacetophila (strain DSM 6194 / JCM 14653 / NBRC 101360 / PT) (Methanosaeta thermophila)).